A 328-amino-acid polypeptide reads, in one-letter code: Malate dehydrogenase 1 (328 aa).

12-18 is a binding site for NAD(+); the sequence is GAAGQIG. Substrate-binding residues include Arg-95 and Arg-101. NAD(+) contacts are provided by residues Asn-108, Gln-115, and 132–134; that span reads VGN. Substrate contacts are provided by Asn-134 and Arg-165. The active-site Proton acceptor is His-190.

It belongs to the LDH/MDH superfamily. MDH type 2 family.

It carries out the reaction (S)-malate + NAD(+) = oxaloacetate + NADH + H(+). Functionally, catalyzes the reversible oxidation of malate to oxaloacetate. This is Malate dehydrogenase 1 from Albidiferax ferrireducens (strain ATCC BAA-621 / DSM 15236 / T118) (Rhodoferax ferrireducens).